We begin with the raw amino-acid sequence, 333 residues long: S-adenosylmethionine decarboxylase proenzyme (333 aa).

F7 contributes to the substrate binding site. Active-site residues include E8 and E11. Residue E67 participates in substrate binding. S68 (schiff-base intermediate with substrate; via pyruvic acid) is an active-site residue. S68 carries the pyruvic acid (Ser); by autocatalysis modification. C82 (proton donor; for catalytic activity) is an active-site residue. Position 223 (F223) interacts with substrate. Active-site proton acceptor; for processing activity residues include S229 and H243. Substrate is bound at residue E247. S298 bears the Phosphoserine mark.

It belongs to the eukaryotic AdoMetDC family. Heterotetramer of two alpha and two beta chains. Pyruvate is required as a cofactor. Is synthesized initially as an inactive proenzyme. Formation of the active enzyme involves a self-maturation process in which the active site pyruvoyl group is generated from an internal serine residue via an autocatalytic post-translational modification. Two non-identical subunits are generated from the proenzyme in this reaction, and the pyruvate is formed at the N-terminus of the alpha chain, which is derived from the carboxyl end of the proenzyme. The post-translation cleavage follows an unusual pathway, termed non-hydrolytic serinolysis, in which the side chain hydroxyl group of the serine supplies its oxygen atom to form the C-terminus of the beta chain, while the remainder of the serine residue undergoes an oxidative deamination to produce ammonia and the pyruvoyl group blocking the N-terminus of the alpha chain.

The enzyme catalyses S-adenosyl-L-methionine + H(+) = S-adenosyl 3-(methylsulfanyl)propylamine + CO2. Its pathway is amine and polyamine biosynthesis; S-adenosylmethioninamine biosynthesis; S-adenosylmethioninamine from S-adenosyl-L-methionine: step 1/1. Functionally, essential for biosynthesis of the polyamines spermidine and spermine. Promotes maintenance and self-renewal of embryonic stem cells, by maintaining spermine levels. This Rattus norvegicus (Rat) protein is S-adenosylmethionine decarboxylase proenzyme (Amd1).